The chain runs to 444 residues: Cortexillin-1 (444 aa).

The segment at M1–A227 is actin-binding. Calponin-homology (CH) domains lie at I8–R115 and K124–R229. 2 coiled-coil regions span residues A227–R352 and L410–A434.

This sequence belongs to the cortexillin family. Homodimer; parallel.

Its subcellular location is the cytoplasm. It is found in the cytoskeleton. Functionally, actin-bundling protein. When linked to F-actin the actin filaments form preferentially anti-parallel bundles that associate into meshworks. Plays a major role in cytokinesis. Negatively regulates cortical localization of rapgap1. The polypeptide is Cortexillin-1 (ctxA) (Dictyostelium discoideum (Social amoeba)).